Consider the following 259-residue polypeptide: Bidirectional sugar transporter SWEET4 (259 aa).

Topologically, residues 1–10 (MVSPDTIRTA) are extracellular. The region spanning 10-94 (AIGVVGNGTA…TYIALFLAFS (85 aa)) is the MtN3/slv 1 domain. A helical membrane pass occupies residues 11-31 (IGVVGNGTALVLFLSPVPTFI). The Cytoplasmic segment spans residues 32–44 (RIWKKGSVEQYSA). Residues 45–65 (VPYVATLLNCMMWVLYGLPAV) traverse the membrane as a helical segment. The Extracellular portion of the chain corresponds to 66 to 77 (HPHSMLVITING). The N-linked (GlcNAc...) asparagine glycan is linked to N76. The chain crosses the membrane as a helical span at residues 78–98 (TGMAIELTYIALFLAFSLGAV). Residues 99–101 (RRR) are Cytoplasmic-facing. Residues 102–122 (VLLLLAAEVAFVAAVAALVLN) form a helical membrane-spanning segment. The Extracellular segment spans residues 123–131 (LAHTHERRS). The chain crosses the membrane as a helical span at residues 132 to 152 (MIVGILCVLFGTGMYAAPLSV). One can recognise a MtN3/slv 2 domain in the interval 133–217 (IVGILCVLFG…ILYAIYYKST (85 aa)). At 153–165 (MKMVIQTKSVEYM) the chain is on the cytoplasmic side. Residues 166–186 (PLFLSLASLVNGICWTAYALI) form a helical membrane-spanning segment. Over 187–191 (RFDLY) the chain is Extracellular. The chain crosses the membrane as a helical span at residues 192 to 212 (ITIPNGLGVMFAVAQLILYAI). Over 213-259 (YYKSTQQIIEARKRKEADHVAMTDVVVDSAKNNPSSGAAAAAANGRY) the chain is Cytoplasmic.

The protein belongs to the SWEET sugar transporter family. Forms homooligomers and/or heterooligomers.

The protein localises to the cell membrane. Its function is as follows. Mediates both low-affinity uptake and efflux of sugar across the plasma membrane. The polypeptide is Bidirectional sugar transporter SWEET4 (SWEET4) (Oryza sativa subsp. indica (Rice)).